The chain runs to 96 residues: Putative toxin Y4kP (96 aa).

Belongs to the RelE toxin family.

Its function is as follows. Toxic component of a type II toxin-antitoxin (TA) system. The sequence is that of Putative toxin Y4kP from Sinorhizobium fredii (strain NBRC 101917 / NGR234).